A 291-amino-acid chain; its full sequence is Elongation factor Ts (291 aa).

The involved in Mg(2+) ion dislocation from EF-Tu stretch occupies residues 78–81; the sequence is TDFV.

The protein belongs to the EF-Ts family.

It is found in the cytoplasm. In terms of biological role, associates with the EF-Tu.GDP complex and induces the exchange of GDP to GTP. It remains bound to the aminoacyl-tRNA.EF-Tu.GTP complex up to the GTP hydrolysis stage on the ribosome. The chain is Elongation factor Ts from Ureaplasma parvum serovar 3 (strain ATCC 27815 / 27 / NCTC 11736).